Consider the following 757-residue polypeptide: 5-methyltetrahydropteroyltriglutamate--homocysteine methyltransferase (757 aa).

Residues 17-20 and Lys-117 each bind 5-methyltetrahydropteroyltri-L-glutamate; that span reads RELK. Residues 434–436 and Glu-487 contribute to the L-homocysteine site; that span reads IGS. Residues 434–436 and Glu-487 contribute to the L-methionine site; that span reads IGS. 5-methyltetrahydropteroyltri-L-glutamate contacts are provided by residues 518–519 and Trp-564; that span reads RC. Asp-602 provides a ligand contact to L-homocysteine. L-methionine is bound at residue Asp-602. A 5-methyltetrahydropteroyltri-L-glutamate-binding site is contributed by Glu-608. The Zn(2+) site is built by His-644, Cys-646, and Glu-668. The active-site Proton donor is the His-697. Cys-729 provides a ligand contact to Zn(2+).

The protein belongs to the vitamin-B12 independent methionine synthase family. It depends on Zn(2+) as a cofactor.

It catalyses the reaction 5-methyltetrahydropteroyltri-L-glutamate + L-homocysteine = tetrahydropteroyltri-L-glutamate + L-methionine. The protein operates within amino-acid biosynthesis; L-methionine biosynthesis via de novo pathway; L-methionine from L-homocysteine (MetE route): step 1/1. Its function is as follows. Catalyzes the transfer of a methyl group from 5-methyltetrahydrofolate to homocysteine resulting in methionine formation. In Proteus mirabilis (strain HI4320), this protein is 5-methyltetrahydropteroyltriglutamate--homocysteine methyltransferase.